A 407-amino-acid chain; its full sequence is Ameloblastin (407 aa).

The signal sequence occupies residues M1–A26. Hydroxyproline is present on P42. S48 carries the phosphoserine modification. 2 disordered regions span residues G124–L143 and Q259–A304.

It belongs to the ameloblastin family. As to expression, ameloblast-specific.

It is found in the secreted. The protein localises to the extracellular space. Its subcellular location is the extracellular matrix. Functionally, involved in the mineralization and structural organization of enamel. This is Ameloblastin (Ambn) from Mus musculus (Mouse).